The primary structure comprises 288 residues: Diaminopimelate epimerase (288 aa).

Residues Asn14 and Asn67 each coordinate substrate. The active-site Proton donor is Cys76. Residues 77-78, Asn166, Asn199, and 217-218 contribute to the substrate site; these read GN and ER. Residue Cys226 is the Proton acceptor of the active site. 227-228 lines the substrate pocket; that stretch reads GT.

It belongs to the diaminopimelate epimerase family. Homodimer.

The protein resides in the cytoplasm. The enzyme catalyses (2S,6S)-2,6-diaminopimelate = meso-2,6-diaminopimelate. Its pathway is amino-acid biosynthesis; L-lysine biosynthesis via DAP pathway; DL-2,6-diaminopimelate from LL-2,6-diaminopimelate: step 1/1. Functionally, catalyzes the stereoinversion of LL-2,6-diaminopimelate (L,L-DAP) to meso-diaminopimelate (meso-DAP), a precursor of L-lysine and an essential component of the bacterial peptidoglycan. The polypeptide is Diaminopimelate epimerase (Bacillus cereus (strain B4264)).